Consider the following 307-residue polypeptide: Protease HtpX homolog (307 aa).

The next 2 helical transmembrane spans lie at 7–27 (AILL…IGGA) and 28–48 (SGAT…YWNS). His-130 contacts Zn(2+). Glu-131 is an active-site residue. Residue His-134 participates in Zn(2+) binding. The next 2 membrane-spanning stretches (helical) occupy residues 145–165 (ITAT…FFGG) and 171–191 (GPGI…AMLV). Glu-200 is a Zn(2+) binding site. The segment at 277–307 (AGQSGGGLAPGGPPPDPSSPWNKGSRRGPWG) is disordered.

The protein belongs to the peptidase M48B family. It depends on Zn(2+) as a cofactor.

The protein localises to the cell inner membrane. This is Protease HtpX homolog from Nitrobacter winogradskyi (strain ATCC 25391 / DSM 10237 / CIP 104748 / NCIMB 11846 / Nb-255).